We begin with the raw amino-acid sequence, 225 residues long: NAD(P)H-quinone oxidoreductase subunit K, chloroplastic (225 aa).

Residues cysteine 43, cysteine 44, cysteine 108, and cysteine 139 each contribute to the [4Fe-4S] cluster site.

This sequence belongs to the complex I 20 kDa subunit family. In terms of assembly, NDH is composed of at least 16 different subunits, 5 of which are encoded in the nucleus. The cofactor is [4Fe-4S] cluster.

The protein resides in the plastid. It localises to the chloroplast thylakoid membrane. It catalyses the reaction a plastoquinone + NADH + (n+1) H(+)(in) = a plastoquinol + NAD(+) + n H(+)(out). It carries out the reaction a plastoquinone + NADPH + (n+1) H(+)(in) = a plastoquinol + NADP(+) + n H(+)(out). Functionally, NDH shuttles electrons from NAD(P)H:plastoquinone, via FMN and iron-sulfur (Fe-S) centers, to quinones in the photosynthetic chain and possibly in a chloroplast respiratory chain. The immediate electron acceptor for the enzyme in this species is believed to be plastoquinone. Couples the redox reaction to proton translocation, and thus conserves the redox energy in a proton gradient. This chain is NAD(P)H-quinone oxidoreductase subunit K, chloroplastic, found in Populus alba (White poplar).